A 350-amino-acid chain; its full sequence is D-alanine--D-alanine ligase (350 aa).

In terms of domain architecture, ATP-grasp spans 134-337; that stretch reads KIFAAQRGVK…LPKKHSIKVS (204 aa). Residue 160–212 coordinates ATP; that stretch reads IAYPIILKPARLGSSIGVSVINEEKELDYGRDLAFEYDDTIIAESFKSGVKEY. The Mg(2+) site is built by aspartate 289, glutamate 301, and asparagine 303.

Belongs to the D-alanine--D-alanine ligase family. The cofactor is Mg(2+). Mn(2+) is required as a cofactor.

The protein resides in the cytoplasm. The catalysed reaction is 2 D-alanine + ATP = D-alanyl-D-alanine + ADP + phosphate + H(+). The protein operates within cell wall biogenesis; peptidoglycan biosynthesis. In terms of biological role, cell wall formation. This Helicobacter hepaticus (strain ATCC 51449 / 3B1) protein is D-alanine--D-alanine ligase.